A 202-amino-acid chain; its full sequence is Cilia- and flagella-associated protein 418 (202 aa).

Residues 71–90 are disordered; the sequence is DVDTPTSTHEPSPAKASSSA. Over residues 74-90 the composition is skewed to polar residues; the sequence is TPTSTHEPSPAKASSSA.

Ubiquitously expressed during early development and in adult tissues including the eye, brain, heart and kidney.

The protein localises to the cytoplasm. It localises to the photoreceptor inner segment. May be involved in photoreceptor outer segment disk morphogenesis. In Danio rerio (Zebrafish), this protein is Cilia- and flagella-associated protein 418 (cfap418).